A 215-amino-acid chain; its full sequence is Large ribosomal subunit protein bL25 (215 aa).

Residues 192–202 (EEEEVEEEVAE) are compositionally biased toward acidic residues. The tract at residues 192–215 (EEEEVEEEVAEPEVIKRKEEEEEE) is disordered. Positions 204 to 215 (EVIKRKEEEEEE) are enriched in basic and acidic residues.

It belongs to the bacterial ribosomal protein bL25 family. CTC subfamily. In terms of assembly, part of the 50S ribosomal subunit; part of the 5S rRNA/L5/L18/L25 subcomplex. Contacts the 5S rRNA. Binds to the 5S rRNA independently of L5 and L18.

Its function is as follows. This is one of the proteins that binds to the 5S RNA in the ribosome where it forms part of the central protuberance. In Thermotoga neapolitana (strain ATCC 49049 / DSM 4359 / NBRC 107923 / NS-E), this protein is Large ribosomal subunit protein bL25.